Consider the following 1070-residue polypeptide: Carbamoyl phosphate synthase large chain (1070 aa).

Residues M1–E401 are carboxyphosphate synthetic domain. 12 residues coordinate ATP: R129, R169, G175, G176, K208, I210, E215, G241, I242, H243, Q284, and E298. An ATP-grasp 1 domain is found at R133–V327. 3 residues coordinate Mg(2+): Q284, E298, and N300. Mn(2+) contacts are provided by Q284, E298, and N300. The interval V402 to S546 is oligomerization domain. The carbamoyl phosphate synthetic domain stretch occupies residues T547–G929. One can recognise an ATP-grasp 2 domain in the interval E671–L861. ATP is bound by residues R707, R746, V748, E752, G777, V778, H779, S780, Q820, and E832. The Mg(2+) site is built by Q820, E832, and N834. Mn(2+) is bound by residues Q820, E832, and N834. One can recognise an MGS-like domain in the interval T930–V1070. Residues T930–V1070 form an allosteric domain region.

Belongs to the CarB family. In terms of assembly, composed of two chains; the small (or glutamine) chain promotes the hydrolysis of glutamine to ammonia, which is used by the large (or ammonia) chain to synthesize carbamoyl phosphate. Tetramer of heterodimers (alpha,beta)4. Mg(2+) serves as cofactor. Requires Mn(2+) as cofactor.

It catalyses the reaction hydrogencarbonate + L-glutamine + 2 ATP + H2O = carbamoyl phosphate + L-glutamate + 2 ADP + phosphate + 2 H(+). It carries out the reaction hydrogencarbonate + NH4(+) + 2 ATP = carbamoyl phosphate + 2 ADP + phosphate + 2 H(+). It participates in amino-acid biosynthesis; L-arginine biosynthesis; carbamoyl phosphate from bicarbonate: step 1/1. The protein operates within pyrimidine metabolism; UMP biosynthesis via de novo pathway; (S)-dihydroorotate from bicarbonate: step 1/3. Functionally, large subunit of the glutamine-dependent carbamoyl phosphate synthetase (CPSase). CPSase catalyzes the formation of carbamoyl phosphate from the ammonia moiety of glutamine, carbonate, and phosphate donated by ATP, constituting the first step of 2 biosynthetic pathways, one leading to arginine and/or urea and the other to pyrimidine nucleotides. The large subunit (synthetase) binds the substrates ammonia (free or transferred from glutamine from the small subunit), hydrogencarbonate and ATP and carries out an ATP-coupled ligase reaction, activating hydrogencarbonate by forming carboxy phosphate which reacts with ammonia to form carbamoyl phosphate. This is Carbamoyl phosphate synthase large chain from Listeria welshimeri serovar 6b (strain ATCC 35897 / DSM 20650 / CCUG 15529 / CIP 8149 / NCTC 11857 / SLCC 5334 / V8).